The primary structure comprises 356 residues: S-adenosylmethionine:tRNA ribosyltransferase-isomerase (356 aa).

This sequence belongs to the QueA family. As to quaternary structure, monomer.

It localises to the cytoplasm. The enzyme catalyses 7-aminomethyl-7-carbaguanosine(34) in tRNA + S-adenosyl-L-methionine = epoxyqueuosine(34) in tRNA + adenine + L-methionine + 2 H(+). The protein operates within tRNA modification; tRNA-queuosine biosynthesis. Functionally, transfers and isomerizes the ribose moiety from AdoMet to the 7-aminomethyl group of 7-deazaguanine (preQ1-tRNA) to give epoxyqueuosine (oQ-tRNA). The sequence is that of S-adenosylmethionine:tRNA ribosyltransferase-isomerase from Escherichia coli O1:K1 / APEC.